Consider the following 327-residue polypeptide: Tetraacyldisaccharide 4'-kinase (327 aa).

Residue 52–59 (TAGGAGKT) participates in ATP binding.

It belongs to the LpxK family.

It carries out the reaction a lipid A disaccharide + ATP = a lipid IVA + ADP + H(+). It functions in the pathway glycolipid biosynthesis; lipid IV(A) biosynthesis; lipid IV(A) from (3R)-3-hydroxytetradecanoyl-[acyl-carrier-protein] and UDP-N-acetyl-alpha-D-glucosamine: step 6/6. Its function is as follows. Transfers the gamma-phosphate of ATP to the 4'-position of a tetraacyldisaccharide 1-phosphate intermediate (termed DS-1-P) to form tetraacyldisaccharide 1,4'-bis-phosphate (lipid IVA). This chain is Tetraacyldisaccharide 4'-kinase, found in Gluconacetobacter diazotrophicus (strain ATCC 49037 / DSM 5601 / CCUG 37298 / CIP 103539 / LMG 7603 / PAl5).